A 609-amino-acid polypeptide reads, in one-letter code: Glutamine--fructose-6-phosphate aminotransferase [isomerizing] (609 aa).

C2 (nucleophile; for GATase activity) is an active-site residue. Positions C2 to R218 constitute a Glutamine amidotransferase type-2 domain. SIS domains lie at A286–L426 and L458–P599. K604 acts as the For Fru-6P isomerization activity in catalysis.

As to quaternary structure, homodimer. In pull-down experiments interacts with CedA.

It is found in the cytoplasm. The catalysed reaction is D-fructose 6-phosphate + L-glutamine = D-glucosamine 6-phosphate + L-glutamate. Its function is as follows. Catalyzes the first step in hexosamine metabolism, converting fructose-6P into glucosamine-6P using glutamine as a nitrogen source. The chain is Glutamine--fructose-6-phosphate aminotransferase [isomerizing] (glmS) from Escherichia coli (strain K12).